Here is a 273-residue protein sequence, read N- to C-terminus: Vacuolar iron transporter (273 aa).

Residues 1-47 (MGKQKIIDARKAYYEGDIEKSKEIHSHYHNLDKHAEHHSLDKDHLKT) are Cytoplasmic-facing. The helical transmembrane segment at 48-68 (IIFGSLDGIITIFAIVSGCVG) threads the bilayer. The Vacuolar segment spans residues 69-72 (ANIT). A helical membrane pass occupies residues 73–93 (PAQVIIIGVGNLFANAISMGF). Residues 94-181 (SEYTSSTAQI…NEDKSEAFKK (88 aa)) are Cytoplasmic-facing. Fe cation is bound by residues Glu-113, Glu-116, Glu-124, Glu-127, Met-161, and Glu-165. Residues 182–202 (GILMFLSFCFFGMIPLFSYVL) traverse the membrane as a helical segment. Residues 203–212 (YNLFFSAENY) lie on the Vacuolar side of the membrane. The helical transmembrane segment at 213–233 (TSSFAVVFISTLITLFILGLF) threads the bilayer. Residues 234–246 (KSQFTTQKPIVCA) are Cytoplasmic-facing. The helical transmembrane segment at 247 to 267 (LSMVLNGSIAGMLPFLFGVLL) threads the bilayer. Residues 268–273 (KTNSGD) lie on the Vacuolar side of the membrane.

Belongs to the CCC1 family. Monomer.

Its subcellular location is the vacuole membrane. It is found in the endoplasmic reticulum membrane. It carries out the reaction Fe(2+)(in) = Fe(2+)(out). Its function is as follows. Vacuolar iron transporter involved in the transfer of iron ions from the cytosol to the vacuole for intracellular iron storage. Involved in detoxification of excess iron. The transport mechanism is not well defined and the role of protons is not clear. In Plasmodium berghei (strain Anka), this protein is Vacuolar iron transporter.